A 428-amino-acid polypeptide reads, in one-letter code: Adenylosuccinate synthetase (428 aa).

Residues 12–18 (GDEGKGK) and 40–42 (GHT) each bind GTP. The active-site Proton acceptor is aspartate 13. Residues aspartate 13 and glycine 40 each coordinate Mg(2+). IMP contacts are provided by residues 13-16 (DEGK), 38-41 (NAGH), threonine 128, arginine 142, glutamine 223, threonine 238, and arginine 302. Catalysis depends on histidine 41, which acts as the Proton donor. Residue 298–304 (TTTGRPR) participates in substrate binding. GTP contacts are provided by residues arginine 304, 330-332 (SID), and 412-414 (SVG).

Belongs to the adenylosuccinate synthetase family. In terms of assembly, homodimer. Requires Mg(2+) as cofactor.

It localises to the cytoplasm. The catalysed reaction is IMP + L-aspartate + GTP = N(6)-(1,2-dicarboxyethyl)-AMP + GDP + phosphate + 2 H(+). It functions in the pathway purine metabolism; AMP biosynthesis via de novo pathway; AMP from IMP: step 1/2. Plays an important role in the de novo pathway of purine nucleotide biosynthesis. Catalyzes the first committed step in the biosynthesis of AMP from IMP. The protein is Adenylosuccinate synthetase of Geobacillus sp. (strain WCH70).